The sequence spans 401 residues: Elongation factor Tu (401 aa).

Residues 10 to 209 (KPHINVGTIG…AVDEYIPTPQ (200 aa)) form the tr-type G domain. The G1 stretch occupies residues 19–26 (GHVDHGKT). Residue 19–26 (GHVDHGKT) participates in GTP binding. Thr-26 is a binding site for Mg(2+). A G2 region spans residues 60–64 (GITIA). Residues 81-84 (DCPG) form a G3 region. Residues 81–85 (DCPGH) and 136–139 (NKVD) contribute to the GTP site. The segment at 136-139 (NKVD) is G4. Positions 174 to 176 (SAR) are G5.

This sequence belongs to the TRAFAC class translation factor GTPase superfamily. Classic translation factor GTPase family. EF-Tu/EF-1A subfamily. Monomer.

It is found in the cytoplasm. It catalyses the reaction GTP + H2O = GDP + phosphate + H(+). GTP hydrolase that promotes the GTP-dependent binding of aminoacyl-tRNA to the A-site of ribosomes during protein biosynthesis. The chain is Elongation factor Tu from Chloroflexus aurantiacus (strain ATCC 29366 / DSM 635 / J-10-fl).